The following is a 137-amino-acid chain: uncharacterized protein (137 aa).

A disordered region spans residues 1-26 (MKDKMWCEDTAQPHRRLPAPPSSSSP).

This is an uncharacterized protein from Homo sapiens (Human).